The sequence spans 531 residues: Efflux pump terG (531 aa).

Positions 1 to 11 (MSSSTLEGQET) are enriched in polar residues. The interval 1 to 27 (MSSSTLEGQETASHHSKNSPSRHGDDG) is disordered. Transmembrane regions (helical) follow at residues 86–106 (GKLS…ILIG), 117–137 (AIFV…GVSV), 145–165 (ILAR…ALAI), 179–199 (FAWF…FGPL), 207–227 (WIYW…IVAI), 249–269 (IDLL…FAWN), 280–300 (YVYV…YVEL), 319–339 (FVFG…FYVI), 351–371 (IQMA…ALIV), 380–400 (ASSI…LMAL), 402–422 (PVHS…TFAM), 447–467 (SVIM…AGTI), and 488–508 (TLWF…IFLL).

It belongs to the major facilitator superfamily.

The protein localises to the cell membrane. Functionally, efflux pump that might be required for efficient secretion of terrein or other secondary metabolies produced by the terrein genne cluster. The protein is Efflux pump terG of Aspergillus terreus (strain NIH 2624 / FGSC A1156).